Here is an 807-residue protein sequence, read N- to C-terminus: Glycerol-3-phosphate acyltransferase (807 aa).

The HXXXXD motif motif lies at 305–310 (CHRSHM).

It belongs to the GPAT/DAPAT family.

The protein localises to the cell inner membrane. It carries out the reaction sn-glycerol 3-phosphate + an acyl-CoA = a 1-acyl-sn-glycero-3-phosphate + CoA. The protein operates within phospholipid metabolism; CDP-diacylglycerol biosynthesis; CDP-diacylglycerol from sn-glycerol 3-phosphate: step 1/3. The protein is Glycerol-3-phosphate acyltransferase of Aliivibrio fischeri (strain MJ11) (Vibrio fischeri).